A 338-amino-acid polypeptide reads, in one-letter code: GTPase Obg (338 aa).

An Obg domain is found at 1–159 (MQFIDQAEIE…RRIRLELKLL (159 aa)). An OBG-type G domain is found at 160–328 (AEVGIIGLPN…MLQATWEQLD (169 aa)). GTP is bound by residues 166-173 (GLPNAGKS), 191-195 (FTTLI), 213-216 (DIPG), 280-283 (NKLD), and 309-311 (SAV). Mg(2+) contacts are provided by Ser173 and Thr193.

It belongs to the TRAFAC class OBG-HflX-like GTPase superfamily. OBG GTPase family. In terms of assembly, monomer. Mg(2+) serves as cofactor.

The protein resides in the cytoplasm. In terms of biological role, an essential GTPase which binds GTP, GDP and possibly (p)ppGpp with moderate affinity, with high nucleotide exchange rates and a fairly low GTP hydrolysis rate. Plays a role in control of the cell cycle, stress response, ribosome biogenesis and in those bacteria that undergo differentiation, in morphogenesis control. The chain is GTPase Obg from Gloeothece citriformis (strain PCC 7424) (Cyanothece sp. (strain PCC 7424)).